A 554-amino-acid polypeptide reads, in one-letter code: Calcium/calmodulin-dependent protein kinase type II delta 2 chain (554 aa).

Residues 13–271 (YQLFEELGKG…AAEAPKHPWI (259 aa)) form the Protein kinase domain. ATP-binding positions include 19–27 (LGKGAFSVV) and Lys-42. The active-site Proton acceptor is the Asp-135. Thr-286 carries the post-translational modification Phosphothreonine. Phosphoserine occurs at positions 314 and 318. Disordered regions lie at residues 324–375 (PDGV…TIED) and 392–413 (WQPS…SSVQ). Over residues 330-340 (NNKTNLASSPK) the composition is skewed to polar residues. Thr-372 is subject to Phosphothreonine.

It belongs to the protein kinase superfamily. CAMK Ser/Thr protein kinase family. CaMK subfamily. In terms of assembly, CAMK2 is composed of four different chains: alpha, beta, gamma, and delta. The different isoforms assemble into homo- or heteromultimeric holoenzymes composed of 8 to 12 subunits. First detected at 18 hpf. At 24 hpf, expressed in discrete anterior locations and along either side of the midline. At 48 hpf, expression is predominantly in the forebrain, and then accumulates in the forebrain, hindbrain, and retinal epithelium at 72 hpf.

It catalyses the reaction L-seryl-[protein] + ATP = O-phospho-L-seryl-[protein] + ADP + H(+). The catalysed reaction is L-threonyl-[protein] + ATP = O-phospho-L-threonyl-[protein] + ADP + H(+). Its activity is regulated as follows. Autophosphorylation of CAMK2 plays an important role in the regulation of the kinase activity. Its function is as follows. CaM-kinase II (CAMK2) is a prominent kinase in the central nervous system. The sequence is that of Calcium/calmodulin-dependent protein kinase type II delta 2 chain (camk2d2) from Danio rerio (Zebrafish).